The chain runs to 517 residues: MIDLTVARVTEIVGGALVDISPEEAAERRVTGSVEFDSRAVGPGGLFLALPGARSDGHDHAASAIAAGAVAVLAARPVGVPAIVVAPDPRTGDGGLTGVLEHDADGSGAAVLAALAKLAKAVAAELVAGGLTIIGITGSSGKTSTKDLVAVVLELLGEVVAPPESFNNELGHPWTVLRATRSTDYLILEMSARRPGNIAALAAIAPPKIGVVLNVGTAHLGEFGSREAIARTKTELPQAIMQSGVVILNVDDPAVAAMADATVARVIRVSRGSYSHPGSPNSPDVWTGPVSLDELARPRFTLHTRDPRAGATEIQLGVYGDHQVANALCAAAVGLECGASVEEVAVALAATGPVSRHRMQVTTRADGVTVIDDTYNANPDSMRAGLQALAWIAHGGTHDKNQPGSCARRSWAVLGEMAELGEDSITEHDRIGRLAVRLDVSRLVVVGGGRSINAMHRGAVMEGSWGLETVNVADPAAALTLLRAEVRPGDVVLIKASHSVGLGALADVLVGDGAIRP.

Position 138–144 (138–144) interacts with ATP; it reads GSSGKTS.

It belongs to the MurCDEF family. MurF subfamily.

The protein localises to the cytoplasm. The catalysed reaction is D-alanyl-D-alanine + UDP-N-acetyl-alpha-D-muramoyl-L-alanyl-gamma-D-glutamyl-meso-2,6-diaminopimelate + ATP = UDP-N-acetyl-alpha-D-muramoyl-L-alanyl-gamma-D-glutamyl-meso-2,6-diaminopimeloyl-D-alanyl-D-alanine + ADP + phosphate + H(+). It participates in cell wall biogenesis; peptidoglycan biosynthesis. Involved in cell wall formation. Catalyzes the final step in the synthesis of UDP-N-acetylmuramoyl-pentapeptide, the precursor of murein. This Mycobacterium leprae (strain TN) protein is UDP-N-acetylmuramoyl-tripeptide--D-alanyl-D-alanine ligase.